The following is a 436-amino-acid chain: GTPase Obg (436 aa).

In terms of domain architecture, Obg spans Met-1–Leu-159. In terms of domain architecture, OBG-type G spans Ala-160 to Asp-335. Residues Gly-166–Ser-173, Phe-191–Asp-195, Asp-213–Gly-216, Thr-285–Asp-288, and Ser-316–Val-318 each bind GTP. Mg(2+)-binding residues include Ser-173 and Thr-193. One can recognise an OCT domain in the interval Lys-357–Glu-436.

It belongs to the TRAFAC class OBG-HflX-like GTPase superfamily. OBG GTPase family. As to quaternary structure, monomer. It depends on Mg(2+) as a cofactor.

Its subcellular location is the cytoplasm. Functionally, an essential GTPase which binds GTP, GDP and possibly (p)ppGpp with moderate affinity, with high nucleotide exchange rates and a fairly low GTP hydrolysis rate. Plays a role in control of the cell cycle, stress response, ribosome biogenesis and in those bacteria that undergo differentiation, in morphogenesis control. This chain is GTPase Obg, found in Oenococcus oeni (strain ATCC BAA-331 / PSU-1).